The chain runs to 206 residues: Imidazoleglycerol-phosphate dehydratase (206 aa).

It belongs to the imidazoleglycerol-phosphate dehydratase family.

It is found in the cytoplasm. The catalysed reaction is D-erythro-1-(imidazol-4-yl)glycerol 3-phosphate = 3-(imidazol-4-yl)-2-oxopropyl phosphate + H2O. The protein operates within amino-acid biosynthesis; L-histidine biosynthesis; L-histidine from 5-phospho-alpha-D-ribose 1-diphosphate: step 6/9. This chain is Imidazoleglycerol-phosphate dehydratase, found in Synechococcus sp. (strain JA-3-3Ab) (Cyanobacteria bacterium Yellowstone A-Prime).